A 182-amino-acid polypeptide reads, in one-letter code: UPF0397 protein SPP_0507 (182 aa).

The next 5 helical transmembrane spans lie at 10–30 (VVAV…NIPT), 46–66 (LLSI…GHAI), 73–93 (YGLW…VGLF), 109–129 (ILIF…VLAP), and 148–168 (IVAG…LLLA).

This sequence belongs to the UPF0397 family.

The protein localises to the cell membrane. The chain is UPF0397 protein SPP_0507 from Streptococcus pneumoniae (strain P1031).